A 119-amino-acid chain; its full sequence is RKLAFRYRRVKEIYNTYKNNVGGLLGPAKREAWLQLRAEIEALTDSWLTLALKALTLIHSRTNCVNILVTTTQLIPALAKVLLYGLGVVFPIENIYSATKIGKESCFERIIQRFGRKVV.

This sequence belongs to the HAD-like hydrolase superfamily. EYA family. Mg(2+) is required as a cofactor.

It localises to the cytoplasm. It is found in the nucleus. It catalyses the reaction O-phospho-L-tyrosyl-[protein] + H2O = L-tyrosyl-[protein] + phosphate. The catalysed reaction is O-phospho-L-seryl-[protein] + H2O = L-seryl-[protein] + phosphate. The enzyme catalyses O-phospho-L-threonyl-[protein] + H2O = L-threonyl-[protein] + phosphate. Functionally, functions both as protein phosphatase and as transcriptional coactivator for SIX1, and probably also for other transcription factors of this family. Tyrosine phosphatase that dephosphorylates 'Tyr-142' of histone H2AX (H2AXY142ph) and promotes efficient DNA repair via the recruitment of DNA repair complexes containing MDC1. 'Tyr-142' phosphorylation of histone H2AX plays a central role in DNA repair and acts as a mark that distinguishes between apoptotic and repair responses to genotoxic stress. Its function as histone phosphatase may contribute to its function in transcription regulation during organogenesis. Also has phosphatase activity with proteins phosphorylated on Ser and Thr residues (in vitro). Required for normal embryonic development of the skeleton, kidneys and ears. In Gallus gallus (Chicken), this protein is Protein phosphatase EYA1 (EYA1).